A 238-amino-acid polypeptide reads, in one-letter code: Thrombin-like enzyme halystase (238 aa).

Residues 1 to 229 (IIGGDECNIN…HLDWIKSIIA (229 aa)) form the Peptidase S1 domain. 6 cysteine pairs are disulfide-bonded: C7–C141, C28–C44, C76–C236, C120–C190, C152–C169, and C180–C205. The active-site Charge relay system is H43. N-linked (GlcNAc...) asparagine glycosylation occurs at N81. D88 (charge relay system) is an active-site residue. A glycan (N-linked (GlcNAc...) asparagine) is linked at N100. Residue S184 is the Charge relay system of the active site.

The protein belongs to the peptidase S1 family. Snake venom subfamily. Monomer. In terms of tissue distribution, expressed by the venom gland.

The protein localises to the secreted. With respect to regulation, inhibited by diisopropylfluorophosphate (DFP), PMSF and leupeptin. In terms of biological role, thrombin-like snake venom serine protease. Cleaves fibrinogen (beta chain of fibrinogen (FGB) and more slowly alpha chain (FGA)) without inducing fibrin clotting and cleaves kininogen to produce bradykinin (KNG), resulting in the reduction of blood pressure. This is Thrombin-like enzyme halystase from Gloydius blomhoffii (Mamushi).